The chain runs to 297 residues: Magnetosome protein MamB (297 aa).

Residues Met-1–Glu-12 lie on the Cytoplasmic side of the membrane. The interval Met-1–Glu-214 is transmembrane domain (TMD). Residues Val-13–Leu-33 traverse the membrane as a helical segment. Residues Met-34–Ser-83 lie on the Lumenal side of the membrane. The helical transmembrane segment at Ser-84–Val-104 threads the bilayer. At Lys-105–Glu-112 the chain is on the cytoplasmic side. A helical membrane pass occupies residues Ala-113–Tyr-133. The Lumenal segment spans residues Arg-134 to Ala-164. A helical membrane pass occupies residues Val-165–Ile-185. At Gly-186–Val-297 the chain is on the cytoplasmic side. Positions Leu-215 to Val-297 are C-terminal domain (CTD).

It belongs to the cation diffusion facilitator (CDF) transporter (TC 2.A.4) family. In terms of assembly, forms homodimers via its C-terminal domain, may form higher order multimers that are sensitive to reducing agent. Probably interacts with MamE. Interacts with MamM via their C-terminal domains.

Its subcellular location is the cell inner membrane. It is found in the magnetosome membrane. Plays a dual, essential role in magnetosome formation; required for magnetosome vesicle formation as well as biomineralization. Requires heterodimerization with MamM for stability. Probably binds and transports iron. One of 7 genes (mamLQBIEMO) able to induce magnetosome membrane biogenesis; coexpression of mamLQRBIEMO in a deletion of the 17 gene mamAB operon restores magnetosome vesicle formation but not magnetite biosynthesis. The polypeptide is Magnetosome protein MamB (Magnetospirillum gryphiswaldense (strain DSM 6361 / JCM 21280 / NBRC 15271 / MSR-1)).